The chain runs to 84 residues: Sec-independent protein translocase protein TatA (84 aa).

A helical membrane pass occupies residues 1–21; it reads MGGFSIWHWLIVLLIVVMVFG. The disordered stretch occupies residues 40-84; sequence KDGMKDGGQSPADEKPVVPASQVTNAQAADKAERNTIDVEARQKS. Residues 69–84 show a composition bias toward basic and acidic residues; sequence DKAERNTIDVEARQKS.

The protein belongs to the TatA/E family. As to quaternary structure, the Tat system comprises two distinct complexes: a TatABC complex, containing multiple copies of TatA, TatB and TatC subunits, and a separate TatA complex, containing only TatA subunits. Substrates initially bind to the TatABC complex, which probably triggers association of the separate TatA complex to form the active translocon.

Its subcellular location is the cell inner membrane. Part of the twin-arginine translocation (Tat) system that transports large folded proteins containing a characteristic twin-arginine motif in their signal peptide across membranes. TatA could form the protein-conducting channel of the Tat system. This chain is Sec-independent protein translocase protein TatA, found in Polaromonas naphthalenivorans (strain CJ2).